A 358-amino-acid chain; its full sequence is Transmembrane protein 144 homolog B (358 aa).

The next 10 helical transmembrane spans lie at 6 to 26 (VIGY…YVPV), 35 to 55 (LAFT…AMFI), 60 to 79 (IFDP…NFCV), 86 to 108 (IGIG…FTGK), 122 to 142 (PALN…FFFI), 211 to 231 (ILGI…MVPM), 244 to 264 (LSFV…VFIV), 279 to 299 (IFPS…LMVA), 307 to 327 (IGFP…SVFY), and 337 to 357 (LLIL…LALS).

It belongs to the TMEM144 family.

The protein localises to the membrane. This chain is Transmembrane protein 144 homolog B (tmem144B), found in Dictyostelium discoideum (Social amoeba).